Consider the following 742-residue polypeptide: Collectin-12 (742 aa).

At Met1–Lys37 the chain is on the cytoplasmic side. Residues Phe38–Gly58 form a helical; Signal-anchor for type II membrane protein membrane-spanning segment. Over Tyr59–Val742 the chain is Extracellular. Coiled-coil stretches lie at residues Gly71–Ala101 and Asn271–Glu334. The interval Thr439 to Asn605 is disordered. Collagen-like domains follow at residues Gly467 to Pro526 and Gly527 to Pro586. Positions Pro475–Pro492 are enriched in pro residues. 2 stretches are compositionally biased toward low complexity: residues Arg502–Pro522 and Gln532–Pro556. Residues Pro571 to Gly589 are compositionally biased toward pro residues. Disulfide bonds link Cys607-Cys618, Cys635-Cys730, and Cys708-Cys722. Residues Tyr614–Glu731 form the C-type lectin domain. Ile644, Asn646, Glu650, Asp670, and Glu674 together coordinate Ca(2+). Positions 691, 694, and 696 each coordinate a carbohydrate. Residues Gln694, Asp696, Asn697, Glu706, Asp707, Asn718, Asp719, and Glu731 each contribute to the Ca(2+) site. Position 706 (Glu706) interacts with a carbohydrate. Residues Asn718 and Asp719 each contribute to the a carbohydrate site.

As to expression, widely expressed.

It is found in the membrane. Its function is as follows. Scavenger receptor that displays several functions associated with host defense. Binds to carbohydrates. This Gallus gallus (Chicken) protein is Collectin-12 (COLEC12).